Consider the following 131-residue polypeptide: Protein Turandot M (131 aa).

A signal peptide spans 1–23 (MNPAIYLSCLVVFSLLLLGKVNA).

Belongs to the Turandot family.

The protein resides in the secreted. Its function is as follows. A humoral factor that may play a role in stress tolerance. Requires Mekk1 expression in the fat body to regulate response to septic injury and consequent immune response. This is Protein Turandot M from Drosophila erecta (Fruit fly).